Reading from the N-terminus, the 130-residue chain is Small ribosomal subunit protein uS8 (130 aa).

This sequence belongs to the universal ribosomal protein uS8 family. Part of the 30S ribosomal subunit.

Functionally, one of the primary rRNA binding proteins, it binds directly to 16S rRNA central domain where it helps coordinate assembly of the platform of the 30S subunit. In Cenarchaeum symbiosum (strain A), this protein is Small ribosomal subunit protein uS8.